Here is a 412-residue protein sequence, read N- to C-terminus: Serine hydroxymethyltransferase (412 aa).

Residues leucine 119 and 123-125 each bind (6S)-5,6,7,8-tetrahydrofolate; that span reads GHL. Lysine 228 is subject to N6-(pyridoxal phosphate)lysine.

It belongs to the SHMT family. As to quaternary structure, homodimer. Pyridoxal 5'-phosphate serves as cofactor.

It is found in the cytoplasm. It carries out the reaction (6R)-5,10-methylene-5,6,7,8-tetrahydrofolate + glycine + H2O = (6S)-5,6,7,8-tetrahydrofolate + L-serine. The protein operates within one-carbon metabolism; tetrahydrofolate interconversion. It functions in the pathway amino-acid biosynthesis; glycine biosynthesis; glycine from L-serine: step 1/1. Functionally, catalyzes the reversible interconversion of serine and glycine with tetrahydrofolate (THF) serving as the one-carbon carrier. This reaction serves as the major source of one-carbon groups required for the biosynthesis of purines, thymidylate, methionine, and other important biomolecules. Also exhibits THF-independent aldolase activity toward beta-hydroxyamino acids, producing glycine and aldehydes, via a retro-aldol mechanism. The polypeptide is Serine hydroxymethyltransferase (Thermodesulfovibrio yellowstonii (strain ATCC 51303 / DSM 11347 / YP87)).